We begin with the raw amino-acid sequence, 54 residues long: Photoreceptor disk component PRCD (54 aa).

Residue cysteine 2 is the site of S-palmitoyl cysteine attachment. Residues 24–54 (QPEPSGADGAVVGSRSERDLQSSGRKEEPLK) are disordered. Positions 38–54 (RSERDLQSSGRKEEPLK) are enriched in basic and acidic residues.

The protein belongs to the PRCD family. As to quaternary structure, interacts with RHO/rhodopsin; the interaction promotes PRCD stability. In terms of processing, palmitoylated at Cys-2. Palmitoylation is essential for protein stability and trafficking to the photoreceptor outer segment, but does not appear to be essential for membrane localization. Probably palmitoylated by ZDHHC3. Post-translationally, phosphorylated. As to expression, expressed in retina.

The protein localises to the cell projection. Its subcellular location is the cilium. It is found in the photoreceptor outer segment. The protein resides in the membrane. It localises to the endoplasmic reticulum. The protein localises to the golgi apparatus. Its function is as follows. Involved in vision. This is Photoreceptor disk component PRCD from Canis lupus familiaris (Dog).